The following is a 794-amino-acid chain: uncharacterized protein (794 aa).

The next 9 helical transmembrane spans lie at 34–54, 67–87, 99–119, 132–152, 257–277, 283–303, 315–335, 353–373, and 421–441; these read FSAS…VFAV, ITAA…AHLI, MLAD…AFAS, LFLF…ADVT, VGPS…AMGL, LAWI…MFQL, WSVN…VLVF, LGAL…ATLF, and WTGT…LMGV.

Its subcellular location is the cell membrane. This is an uncharacterized protein from Corynebacterium glutamicum (strain ATCC 13032 / DSM 20300 / JCM 1318 / BCRC 11384 / CCUG 27702 / LMG 3730 / NBRC 12168 / NCIMB 10025 / NRRL B-2784 / 534).